A 206-amino-acid polypeptide reads, in one-letter code: Endoplasmic reticulum transmembrane protein 1 (206 aa).

Residues 1 to 7 lie on the Lumenal side of the membrane; that stretch reads MSLYFTT. Residues 8-28 form a helical membrane-spanning segment; sequence LFLLLTVEMVMLFIFVLPLPF. Residues 29–45 are Cytoplasmic-facing; sequence RIRRGIFSTYNQLTAKQ. A helical membrane pass occupies residues 46–66; it reads QIKTIIFITGCLVGLLFIDSW. The Lumenal segment spans residues 67–104; sequence KRSQIRVSLYHNDNSGSIGSSAVTPIQALASRAYNQRN. A helical transmembrane segment spans residues 105-125; it reads MYISGFILYFSICIPTVMSIV. The Cytoplasmic portion of the chain corresponds to 126-206; that stretch reads KRLVKYQGLI…AAAEASKKGN (81 aa). The disordered stretch occupies residues 140-163; it reads KQKLNKPSSNSKKDSNEADSTKLQ. The span at 150–163 shows a compositional bias: basic and acidic residues; the sequence is SKKDSNEADSTKLQ. Lys-190 participates in a covalent cross-link: Glycyl lysine isopeptide (Lys-Gly) (interchain with G-Cter in ubiquitin). The Di-lysine motif signature appears at 203–206; it reads KKGN.

The protein belongs to the BCAP29/BCAP31 family.

It localises to the endoplasmic reticulum membrane. In terms of biological role, may play a role in anterograde transport of membrane proteins from the endoplasmic reticulum to the Golgi. In Saccharomyces cerevisiae (strain ATCC 204508 / S288c) (Baker's yeast), this protein is Endoplasmic reticulum transmembrane protein 1 (YET1).